The chain runs to 121 residues: Large ribosomal subunit protein uL22c (121 aa).

It belongs to the universal ribosomal protein uL22 family. Part of the 50S ribosomal subunit.

The protein localises to the plastid. It localises to the chloroplast. This protein binds specifically to 23S rRNA. In terms of biological role, the globular domain of the protein is located near the polypeptide exit tunnel on the outside of the subunit, while an extended beta-hairpin is found that lines the wall of the exit tunnel in the center of the 70S ribosome. The chain is Large ribosomal subunit protein uL22c (rpl22) from Guillardia theta (Cryptophyte).